The following is a 490-amino-acid chain: ATP synthase subunit beta, chloroplastic (490 aa).

Residue 170 to 177 (GGAGVGKT) participates in ATP binding.

This sequence belongs to the ATPase alpha/beta chains family. F-type ATPases have 2 components, CF(1) - the catalytic core - and CF(0) - the membrane proton channel. CF(1) has five subunits: alpha(3), beta(3), gamma(1), delta(1), epsilon(1). CF(0) has four main subunits: a(1), b(1), b'(1) and c(9-12).

It localises to the plastid. It is found in the chloroplast thylakoid membrane. The catalysed reaction is ATP + H2O + 4 H(+)(in) = ADP + phosphate + 5 H(+)(out). Functionally, produces ATP from ADP in the presence of a proton gradient across the membrane. The catalytic sites are hosted primarily by the beta subunits. This chain is ATP synthase subunit beta, chloroplastic, found in Ipomoea quamoclit (Cypress vine).